Reading from the N-terminus, the 215-residue chain is Myelin protein zero-like protein 2 (215 aa).

Positions 1–26 (MYGKSPTRAVLFLLGLQLTALWPTAA) are cleaved as a signal peptide. Residues 27-141 (VEIYTPRVLE…DGLIGEIQLS (115 aa)) form the Ig-like V-type domain. Residues 27 to 154 (VEIYTPRVLE…TVRFSEIHFL (128 aa)) lie on the Extracellular side of the membrane. Residues Asn39 and Asn118 are each glycosylated (N-linked (GlcNAc...) asparagine). Residues Cys47 and Cys123 are joined by a disulfide bond. Residues 155–175 (ALAIGSACALMVIIVIVVVLF) traverse the membrane as a helical segment. Residues 176–215 (QHFRKKRRAERAHRVVEIKSKEEEKLNQEKKASVSLEYTD) are Cytoplasmic-facing.

This sequence belongs to the myelin P0 protein family.

The protein resides in the membrane. Its function is as follows. Mediates homophilic cell-cell adhesion. The sequence is that of Myelin protein zero-like protein 2 (MPZL2) from Bos taurus (Bovine).